The following is a 311-amino-acid chain: Large ribosomal subunit protein uL18 (311 aa).

The protein belongs to the universal ribosomal protein uL18 family. Component of the large ribosomal subunit (LSU).

It localises to the cytoplasm. Its subcellular location is the nucleus. Component of the ribosome, a large ribonucleoprotein complex responsible for the synthesis of proteins in the cell. The small ribosomal subunit (SSU) binds messenger RNAs (mRNAs) and translates the encoded message by selecting cognate aminoacyl-transfer RNA (tRNA) molecules. The large subunit (LSU) contains the ribosomal catalytic site termed the peptidyl transferase center (PTC), which catalyzes the formation of peptide bonds, thereby polymerizing the amino acids delivered by tRNAs into a polypeptide chain. The nascent polypeptides leave the ribosome through a tunnel in the LSU and interact with protein factors that function in enzymatic processing, targeting, and the membrane insertion of nascent chains at the exit of the ribosomal tunnel. The polypeptide is Large ribosomal subunit protein uL18 (RPL5) (Eimeria tenella (Coccidian parasite)).